A 1000-amino-acid chain; its full sequence is Integrin alpha-PS5 (1000 aa).

FG-GAP repeat units follow at residues 15 to 74, 75 to 137, 145 to 198, 199 to 261, 262 to 323, 324 to 379, and 386 to 448; these read KHLK…GSCS, HYVL…DTPP, SLIP…AAQG, SYAV…GEIV, RKLH…FKFE, KKII…GLRD, and DAPS…SESR. N-linked (GlcNAc...) asparagine glycosylation occurs at N58. N231 carries an N-linked (GlcNAc...) asparagine glycan. N-linked (GlcNAc...) asparagine glycans are attached at residues N516, N592, N622, N732, N771, N829, N842, N853, and N922. The chain crosses the membrane as a helical span at residues 930-950; the sequence is IWYIILSLIAGHLLLGAMTYI. The Cytoplasmic segment spans residues 951-1000; the sequence is LYKLRFFKRGKKEELKRLLEEHRSETKEPATDCEGNQEEINVEMHSDLEN. The span at 971–980 shows a compositional bias: basic and acidic residues; that stretch reads EHRSETKEPA. The tract at residues 971 to 1000 is disordered; it reads EHRSETKEPATDCEGNQEEINVEMHSDLEN.

The protein belongs to the integrin alpha chain family. As to quaternary structure, heterodimer of an alpha and a beta subunit. Alpha-PS5 associates with beta-PS. In terms of tissue distribution, expressed in all follicle cells overlying the oocyte during mid-oogenesis, the strongest expression is observed in the cells covering the anterior end of the oocyte and in the cells forming the dorsal appendages. After completion of oocyte enlargement, expression in main body follicle cells is down-regulated but persists strongly in the dorsal appendage forming cells. Expressed in lamellocytes.

The protein resides in the membrane. Its function is as follows. Possible role in cell-cell interactions. Minor involvement in the establishment of the oocyte anterior-posterior length. In Drosophila melanogaster (Fruit fly), this protein is Integrin alpha-PS5.